A 77-amino-acid chain; its full sequence is Teretoxin Tan15.2 (77 aa).

A signal peptide spans 1–21; that stretch reads MTRLTVVFLAILVLLPLATSN. Residues 22–40 constitute a propeptide that is removed on maturation; sequence SGADEAPASLSDLLHRTKR.

Post-translationally, contains 4 disulfide bonds. Expressed by the venom duct.

Its subcellular location is the secreted. This Terebra anilis (Auger snail) protein is Teretoxin Tan15.2.